A 312-amino-acid chain; its full sequence is Malate dehydrogenase (312 aa).

Residues 7 to 13 (GAAGGIG) and Asp34 contribute to the NAD(+) site. Positions 81 and 87 each coordinate substrate. NAD(+)-binding positions include Asn94 and 117-119 (ITN). Substrate is bound by residues Asn119 and Arg153. The Proton acceptor role is filled by His177. Met227 provides a ligand contact to NAD(+).

It belongs to the LDH/MDH superfamily. MDH type 1 family. Homodimer.

It catalyses the reaction (S)-malate + NAD(+) = oxaloacetate + NADH + H(+). Catalyzes the reversible oxidation of malate to oxaloacetate. The sequence is that of Malate dehydrogenase from Salmonella choleraesuis (strain SC-B67).